The chain runs to 696 residues: DNA ligase (696 aa).

NAD(+) contacts are provided by residues 36–40 (DAEYD), 85–86 (SL), and E123. K125 serves as the catalytic N6-AMP-lysine intermediate. NAD(+) is bound by residues R146, E181, K319, and K343. Positions 437, 440, 455, and 461 each coordinate Zn(2+). The BRCT domain maps to 618-696 (PEGTSLAGKT…EDGLKALLGL (79 aa)).

It belongs to the NAD-dependent DNA ligase family. LigA subfamily. It depends on Mg(2+) as a cofactor. Mn(2+) is required as a cofactor.

The enzyme catalyses NAD(+) + (deoxyribonucleotide)n-3'-hydroxyl + 5'-phospho-(deoxyribonucleotide)m = (deoxyribonucleotide)n+m + AMP + beta-nicotinamide D-nucleotide.. Functionally, DNA ligase that catalyzes the formation of phosphodiester linkages between 5'-phosphoryl and 3'-hydroxyl groups in double-stranded DNA using NAD as a coenzyme and as the energy source for the reaction. It is essential for DNA replication and repair of damaged DNA. In Bordetella parapertussis (strain 12822 / ATCC BAA-587 / NCTC 13253), this protein is DNA ligase.